A 557-amino-acid polypeptide reads, in one-letter code: Small ribosomal subunit protein bS1 (557 aa).

6 S1 motif domains span residues 21-87, 105-171, 192-260, 277-347, 364-434, and 451-520; these read GSIV…LSRE, SATV…VSRR, GMEV…LGLK, GTKL…LGLK, GDRV…LGVK, and GAIV…LSIR.

The protein belongs to the bacterial ribosomal protein bS1 family.

Its function is as follows. Binds mRNA; thus facilitating recognition of the initiation point. It is needed to translate mRNA with a short Shine-Dalgarno (SD) purine-rich sequence. In Dickeya dadantii (strain 3937) (Erwinia chrysanthemi (strain 3937)), this protein is Small ribosomal subunit protein bS1 (rpsA).